We begin with the raw amino-acid sequence, 420 residues long: MSEKYWNIASHYFAGGVNSPVRAAVKPYPFYVERAEGAYLYTADNKQLIDYVLGYGPLILGHANQYVTKKIIEQVNKGWLYGTPSPIEIELARKISHHLPSAQKIRFVNSGTEATMLALRLARAYTGREKIIKFHGNYHGAHDYLLLDAGSAFTEFNVNVYNGIPKSIVNTIRICEYNDAECVEKLSKSEDIAGVIVEPVMGNMGVILPDKDFLERLREITLTYNSVLIFDEVITGFRLGLGGAQGTFNVTPDLTTLGKIIGGGLPIGAVAGKKEIIDMLTPAGKVFNAGTFNANPLTMTAGLATIEVLERENVHEVANRAVNVILEELVNALDKKIPNNFVINHIGSMFQVFFGVKKVSNATEAKLANKEMYQKFHNLLLQRGVFIPPSQFETIFTSYAHKDVVVNTTLEILRKVVQEL.

K259 is modified (N6-(pyridoxal phosphate)lysine).

It belongs to the class-III pyridoxal-phosphate-dependent aminotransferase family. HemL subfamily. It depends on pyridoxal 5'-phosphate as a cofactor.

Its subcellular location is the cytoplasm. It carries out the reaction (S)-4-amino-5-oxopentanoate = 5-aminolevulinate. It participates in porphyrin-containing compound metabolism; protoporphyrin-IX biosynthesis; 5-aminolevulinate from L-glutamyl-tRNA(Glu): step 2/2. The chain is Glutamate-1-semialdehyde 2,1-aminomutase from Sulfolobus acidocaldarius (strain ATCC 33909 / DSM 639 / JCM 8929 / NBRC 15157 / NCIMB 11770).